The sequence spans 133 residues: Helix-loop-helix protein 1 (133 aa).

The segment at methionine 1 to alanine 79 is disordered. The span at aspartate 25 to alanine 45 shows a compositional bias: gly residues. Residues glutamate 52–glutamate 65 show a composition bias toward basic and acidic residues. Residues arginine 66–alanine 79 show a composition bias toward basic residues. One can recognise a bHLH domain in the interval lysine 75–leucine 127.

Efficient DNA binding requires dimerization with another bHLH protein.

The protein localises to the nucleus. In terms of biological role, may serve as DNA-binding protein and may be involved in the control of cell-type determination, possibly within the developing nervous system. The chain is Helix-loop-helix protein 1 (NHLH1) from Homo sapiens (Human).